Consider the following 135-residue polypeptide: CTP pyrophosphohydrolase (135 aa).

The Nudix hydrolase domain maps to 2–127 (KMIEVVAAII…DIPLLEAFMA (126 aa)). Substrate contacts are provided by residues 34–39 (FAGGKV), arginine 72, and aspartate 118. A Nudix box motif is present at residues 37–58 (GKVEPDESQRQALVRELREELG).

Belongs to the Nudix hydrolase family. Monomer. Mg(2+) serves as cofactor. It depends on Mn(2+) as a cofactor.

It catalyses the reaction CTP + H2O = CMP + diphosphate + H(+). The enzyme catalyses dCTP + H2O = dCMP + diphosphate + H(+). Its function is as follows. Hydrolase with a preference for pyrimidine substrates. Has high activity with 5-methyl-dCTP, and much lower activity with CTP, dCTP, 5-hydroxy-dCTP, 2-hydroxy-dATP and 8-hydroxy-dGTP. This chain is CTP pyrophosphohydrolase (nudG), found in Escherichia coli (strain K12).